The sequence spans 510 residues: Lysine--tRNA ligase (510 aa).

The Mg(2+) site is built by Glu-420 and Glu-427.

The protein belongs to the class-II aminoacyl-tRNA synthetase family. Homodimer. Mg(2+) serves as cofactor.

The protein resides in the cytoplasm. The enzyme catalyses tRNA(Lys) + L-lysine + ATP = L-lysyl-tRNA(Lys) + AMP + diphosphate. The sequence is that of Lysine--tRNA ligase (lysS) from Vibrio cholerae serotype O1 (strain ATCC 39315 / El Tor Inaba N16961).